Consider the following 209-residue polypeptide: MRAPHKDEIASHELPATPMDPALAANREGKIKVATIGLCGCWGCTLSFLDMDERLLPLLEKVTLLRSSLTDIKRIPERCAIGFVEGGVSSEENIETLEHFRENCDILISVGACAVWGGVPAMRNVFELKDCLAEAYVNSATAVPGAKAVVPFHPDIPRITTKVYPCHEVVKMDYFIPGCPPDGDAIFKVLDDLVNGRPFDLPSSINRYD.

Tetramer of an alpha and a gamma subunits (flavin-containing dimer), and a delta and a nickel-containing beta subunits (hydrogenase dimer). The cofactor is [4Fe-4S] cluster. Requires [3Fe-4S] cluster as cofactor. It depends on [2Fe-2S] cluster as a cofactor. FMN serves as cofactor. Ni(2+) is required as a cofactor.

Its subcellular location is the cytoplasm. The catalysed reaction is H2 + NAD(+) = NADH + H(+). In Cupriavidus necator (strain ATCC 17699 / DSM 428 / KCTC 22496 / NCIMB 10442 / H16 / Stanier 337) (Ralstonia eutropha), this protein is NAD-reducing hydrogenase HoxS subunit delta (hoxY).